We begin with the raw amino-acid sequence, 82 residues long: Leucinostatins biosynthesis cluster protein M (82 aa).

The interval 34 to 82 (ARNETHDPSGPRAPVSSMRLGPRSRPYHHGTARLRGSPNCSRDSSSAAT) is disordered. A compositionally biased stretch (polar residues) spans 71–82 (PNCSRDSSSAAT).

Part of the gene cluster that mediates the biosynthesis of the lipopeptide antibiotics leucinostatins that show extensive biological activities, including antimalarial, antiviral, antibacterial, antifungal, and antitumor activities, as well as phytotoxic. The function of lcsM within the leucinostatins biosynthesis has not been identified yet. The polypeptide is Leucinostatins biosynthesis cluster protein M (Purpureocillium lilacinum (Paecilomyces lilacinus)).